The chain runs to 472 residues: Ribulose bisphosphate carboxylase/oxygenase activase, chloroplastic (472 aa).

Residues 1–58 (MATAVSTVGAATRAPLNLNGSSAGASVPTSGFLGSSLKKHTNVRFPSSSRTTSMTVKA) constitute a chloroplast transit peptide. 163–170 (GGKGQGKS) provides a ligand contact to ATP. The disordered stretch occupies residues 448–472 (GCTDPEAKNYDPTARSDDGSCTYNL). Positions 452-465 (PEAKNYDPTARSDD) are enriched in basic and acidic residues.

The protein belongs to the RuBisCO activase family.

Its subcellular location is the plastid. The protein localises to the chloroplast stroma. Functionally, activation of RuBisCO (ribulose-1,5-bisphosphate carboxylase/oxygenase; EC 4.1.1.39) involves the ATP-dependent carboxylation of the epsilon-amino group of lysine leading to a carbamate structure. In Spinacia oleracea (Spinach), this protein is Ribulose bisphosphate carboxylase/oxygenase activase, chloroplastic.